Consider the following 294-residue polypeptide: Nucleotide-binding protein CLD_1131 (294 aa).

8–15 (GLSGAGKT) lines the ATP pocket. GTP is bound at residue 59-62 (DIRG).

This sequence belongs to the RapZ-like family.

Functionally, displays ATPase and GTPase activities. The protein is Nucleotide-binding protein CLD_1131 of Clostridium botulinum (strain Okra / Type B1).